An 881-amino-acid polypeptide reads, in one-letter code: Fanconi anemia core complex-associated protein 100 (881 aa).

A disordered region spans residues 94–119 (GRSRSTSQDDRDSEDGDQPSPVIPVD). Ser-667 carries the post-translational modification Phosphoserine.

Belongs to the multisubunit FA complex composed of FANCA, FANCB, FANCC, FANCE, FANCF, FANCG, FANCL/PHF9, FANCM, FAAP24 and FAAP100. Forms a subcomplex with FANCB and FANCL.

The protein localises to the nucleus. Functionally, plays a role in Fanconi anemia-associated DNA damage response network. Regulates FANCD2 monoubiquitination and the stability of the FA core complex. Induces chromosomal instability as well as hypersensitivity to DNA cross-linking agents, when repressed. The chain is Fanconi anemia core complex-associated protein 100 from Homo sapiens (Human).